The sequence spans 66 residues: uncharacterized protein (66 aa).

Residues 1 to 21 are disordered; sequence MPGGDRTGPWGQGPRTGRRAG.

This is an uncharacterized protein from Archaeoglobus fulgidus (strain ATCC 49558 / DSM 4304 / JCM 9628 / NBRC 100126 / VC-16).